Reading from the N-terminus, the 878-residue chain is Alanine--tRNA ligase (878 aa).

H568, H572, C670, and H674 together coordinate Zn(2+).

Belongs to the class-II aminoacyl-tRNA synthetase family. Zn(2+) is required as a cofactor.

It is found in the cytoplasm. It carries out the reaction tRNA(Ala) + L-alanine + ATP = L-alanyl-tRNA(Ala) + AMP + diphosphate. Catalyzes the attachment of alanine to tRNA(Ala) in a two-step reaction: alanine is first activated by ATP to form Ala-AMP and then transferred to the acceptor end of tRNA(Ala). Also edits incorrectly charged Ser-tRNA(Ala) and Gly-tRNA(Ala) via its editing domain. The polypeptide is Alanine--tRNA ligase (Latilactobacillus sakei subsp. sakei (strain 23K) (Lactobacillus sakei subsp. sakei)).